The sequence spans 297 residues: Bifunctional protein FolD 1 (297 aa).

NADP(+)-binding positions include glycine 164–serine 166, serine 193, and isoleucine 234.

The protein belongs to the tetrahydrofolate dehydrogenase/cyclohydrolase family. In terms of assembly, homodimer.

The enzyme catalyses (6R)-5,10-methylene-5,6,7,8-tetrahydrofolate + NADP(+) = (6R)-5,10-methenyltetrahydrofolate + NADPH. It carries out the reaction (6R)-5,10-methenyltetrahydrofolate + H2O = (6R)-10-formyltetrahydrofolate + H(+). It functions in the pathway one-carbon metabolism; tetrahydrofolate interconversion. Functionally, catalyzes the oxidation of 5,10-methylenetetrahydrofolate to 5,10-methenyltetrahydrofolate and then the hydrolysis of 5,10-methenyltetrahydrofolate to 10-formyltetrahydrofolate. In Haloarcula marismortui (strain ATCC 43049 / DSM 3752 / JCM 8966 / VKM B-1809) (Halobacterium marismortui), this protein is Bifunctional protein FolD 1.